A 151-amino-acid polypeptide reads, in one-letter code: Protein Turandot Z (151 aa).

The first 23 residues, 1-23, serve as a signal peptide directing secretion; that stretch reads MSRLIHLSFVLALLACLTGPISA.

Belongs to the Turandot family.

It is found in the secreted. Its function is as follows. A humoral factor that may play a role in stress tolerance. The chain is Protein Turandot Z from Drosophila pseudoobscura pseudoobscura (Fruit fly).